Consider the following 943-residue polypeptide: UvrABC system protein A (943 aa).

Gly31–Ser38 provides a ligand contact to ATP. The C4-type zinc-finger motif lies at Cys253 to Cys280. ABC transporter domains follow at residues Trp310 to Ile587 and Leu607 to Lys937. Gly640 to Ser647 contributes to the ATP binding site. The C4-type zinc-finger motif lies at Cys740–Cys766.

This sequence belongs to the ABC transporter superfamily. UvrA family. As to quaternary structure, forms a heterotetramer with UvrB during the search for lesions.

The protein localises to the cytoplasm. Functionally, the UvrABC repair system catalyzes the recognition and processing of DNA lesions. UvrA is an ATPase and a DNA-binding protein. A damage recognition complex composed of 2 UvrA and 2 UvrB subunits scans DNA for abnormalities. When the presence of a lesion has been verified by UvrB, the UvrA molecules dissociate. This Haemophilus influenzae (strain ATCC 51907 / DSM 11121 / KW20 / Rd) protein is UvrABC system protein A.